The primary structure comprises 128 residues: Protein ApaG (128 aa).

The ApaG domain maps to 1-123 (MTSSPDITVS…FRLDIAPESG (123 aa)).

This is Protein ApaG from Deinococcus radiodurans (strain ATCC 13939 / DSM 20539 / JCM 16871 / CCUG 27074 / LMG 4051 / NBRC 15346 / NCIMB 9279 / VKM B-1422 / R1).